The following is a 374-amino-acid chain: MIELNPVRQRITDLTDRVLSLRGYLDYDAKKERLEEVTRELESPDVWNNAEYAQNLGRERSSLEKTVGGIASVLDGLADATELLELAESEQDEDTALAVVADLDKHQAHVEKLEFQRMFSGEMDNAAAFVDIQAGAGGTEAQDWAEILLRMYLRWCESRGWKTELMEVSGGDVAGIKSATLRVEGDYAYGWLKTETGVHRLVRKSPFDSDNRRHTSFTSVFVSPEIDDNIDITINPADLRTDVYRSSGAGGQHVNKTESAVRITHIPTNIVVACQTGRSQHQNRDNAMKMLAAKLYELEIQKRNAEKDAVEATKSDIGWGSQIRNYVLDQSRIKDLRTGIERSDTQKVLDGDLDEFVEASLKAGLAVGSKRVDA.

N5-methylglutamine is present on Gln-252.

It belongs to the prokaryotic/mitochondrial release factor family. Methylated by PrmC. Methylation increases the termination efficiency of RF2.

Its subcellular location is the cytoplasm. Its function is as follows. Peptide chain release factor 2 directs the termination of translation in response to the peptide chain termination codons UGA and UAA. This is Peptide chain release factor 2 from Stenotrophomonas maltophilia (strain R551-3).